A 150-amino-acid chain; its full sequence is Peptide deformylase (150 aa).

C88 and H130 together coordinate Fe cation. E131 is an active-site residue. H134 provides a ligand contact to Fe cation.

It belongs to the polypeptide deformylase family. Fe(2+) serves as cofactor.

The enzyme catalyses N-terminal N-formyl-L-methionyl-[peptide] + H2O = N-terminal L-methionyl-[peptide] + formate. Functionally, removes the formyl group from the N-terminal Met of newly synthesized proteins. Requires at least a dipeptide for an efficient rate of reaction. N-terminal L-methionine is a prerequisite for activity but the enzyme has broad specificity at other positions. The polypeptide is Peptide deformylase (Desulfitobacterium hafniense (strain DSM 10664 / DCB-2)).